The primary structure comprises 641 residues: Chaperone protein DnaK (641 aa).

Residue threonine 201 is modified to Phosphothreonine; by autocatalysis. Positions 604 to 622 (ASAEQGGAAPGADAGNAGK) are enriched in low complexity. A disordered region spans residues 604 to 625 (ASAEQGGAAPGADAGNAGKAQD).

This sequence belongs to the heat shock protein 70 family.

Functionally, acts as a chaperone. The protein is Chaperone protein DnaK of Stenotrophomonas maltophilia (strain R551-3).